Here is a 447-residue protein sequence, read N- to C-terminus: UPF0328 protein ECU10_1870 (447 aa).

2 stretches are compositionally biased toward basic and acidic residues: residues 1 to 10 and 64 to 84; these read MPSDHPDFRS and HTEG…HTET. Disordered regions lie at residues 1–103 and 147–173; these read MPSD…TATP and VKSQ…NPRI. A compositionally biased stretch (pro residues) spans 92–103; it reads CPPPHPGPTATP.

Belongs to the UPF0328 family.

In Encephalitozoon cuniculi (strain GB-M1) (Microsporidian parasite), this protein is UPF0328 protein ECU10_1870.